Consider the following 206-residue polypeptide: 3-demethoxyubiquinol 3-hydroxylase (206 aa).

Fe cation contacts are provided by Glu55, Glu85, His88, Glu137, Glu169, and His172.

This sequence belongs to the COQ7 family. Requires Fe cation as cofactor.

It is found in the cell membrane. The catalysed reaction is a 5-methoxy-2-methyl-3-(all-trans-polyprenyl)benzene-1,4-diol + AH2 + O2 = a 3-demethylubiquinol + A + H2O. It functions in the pathway cofactor biosynthesis; ubiquinone biosynthesis. Its function is as follows. Catalyzes the hydroxylation of 2-nonaprenyl-3-methyl-6-methoxy-1,4-benzoquinol during ubiquinone biosynthesis. This chain is 3-demethoxyubiquinol 3-hydroxylase, found in Azoarcus sp. (strain BH72).